A 70-amino-acid chain; its full sequence is Putative antitoxin VapB34 (70 aa).

Its function is as follows. Antitoxin component of a possible type II toxin-antitoxin (TA) system. The cognate toxin is VapC34. The chain is Putative antitoxin VapB34 (vapB34) from Mycobacterium tuberculosis (strain CDC 1551 / Oshkosh).